We begin with the raw amino-acid sequence, 29 residues long: HSEGTFSNDYSKYLETRRAQDFVQWLKNS.

The protein belongs to the glucagon family.

The protein resides in the secreted. Promotes hydrolysis of glycogen and lipids, and raises the blood sugar level. This chain is Glucagon (gcg), found in Thunnus obesus (Bigeye tuna).